The following is a 210-amino-acid chain: Urease accessory protein UreG (210 aa).

14–21 serves as a coordination point for GTP; sequence GPVGSGKT.

It belongs to the SIMIBI class G3E GTPase family. UreG subfamily. In terms of assembly, homodimer. UreD, UreF and UreG form a complex that acts as a GTP-hydrolysis-dependent molecular chaperone, activating the urease apoprotein by helping to assemble the nickel containing metallocenter of UreC. The UreE protein probably delivers the nickel.

The protein localises to the cytoplasm. In terms of biological role, facilitates the functional incorporation of the urease nickel metallocenter. This process requires GTP hydrolysis, probably effectuated by UreG. In Rhodopseudomonas palustris (strain BisB5), this protein is Urease accessory protein UreG.